We begin with the raw amino-acid sequence, 180 residues long: Putative adenylate kinase (180 aa).

The ATP site is built by Gly-10, Gly-12, Lys-13, Thr-14, and Thr-15. Residues 30-50 are NMP; the sequence is NLRDFALEKGIGEVKGDELEV. The tract at residues 99–109 is LID; it reads ERGYSKDKIGE. ATP-binding residues include Arg-100 and Lys-138.

It belongs to the adenylate kinase family. AK6 subfamily. In terms of assembly, interacts with uS11. Not a structural component of 40S pre-ribosomes, but transiently interacts with them by binding to uS11.

The enzyme catalyses AMP + ATP = 2 ADP. It carries out the reaction ATP + H2O = ADP + phosphate + H(+). Its function is as follows. Broad-specificity nucleoside monophosphate (NMP) kinase that catalyzes the reversible transfer of the terminal phosphate group between nucleoside triphosphates and monophosphates. Also has ATPase activity. Involved in the late maturation steps of the 30S ribosomal particles, specifically 16S rRNA maturation. While NMP activity is not required for ribosome maturation, ATPase activity is. Associates transiently with small ribosomal subunit protein uS11. ATP hydrolysis breaks the interaction with uS11. May temporarily remove uS11 from the ribosome to enable a conformational change of the ribosomal RNA that is needed for the final maturation step of the small ribosomal subunit. This is Putative adenylate kinase from Pyrococcus furiosus (strain ATCC 43587 / DSM 3638 / JCM 8422 / Vc1).